Here is a 409-residue protein sequence, read N- to C-terminus: Probable ferredoxin reductase CtmF (409 aa).

FAD is bound by residues A15, D37, K50, V83, D279, and V298.

The protein belongs to the FAD-dependent oxidoreductase family. It depends on FAD as a cofactor.

It participates in terpene metabolism; monoterpene degradation. Involved in the degradation of the cyclic monoterpene limonene. Probably part of an electron transfer system involved in the oxidation of limonene to perillyl alcohol. The sequence is that of Probable ferredoxin reductase CtmF from Castellaniella defragrans (strain DSM 12143 / CCUG 39792 / 65Phen) (Alcaligenes defragrans).